The primary structure comprises 449 residues: Lysine-sensitive aspartokinase 3 (449 aa).

The aspartokinase stretch occupies residues 2–245 (SEIVVSKFGG…AAKRIDEIAF (244 aa)). 8–11 (KFGG) is a binding site for ATP. Substrate is bound by residues T45, E119, and 198-201 (RGGS). Residues 221-222 (TD), Y227, R232, and 257-258 (KV) contribute to the ATP site. Residues 246 to 449 (AEAAEMATFG…VQKLHSNLFE (204 aa)) are interface. A required for homodimerization region spans residues 299-449 (FRALALRRNQ…VQKLHSNLFE (151 aa)). An ACT domain is found at 313-394 (LHSLNMLHSR…GLALVALIGN (82 aa)). L-lysine-binding positions include M318, S321, 324-325 (FL), 338-340 (SVD), and 345-346 (SE).

Belongs to the aspartokinase family. As to quaternary structure, homodimer. In the inactive form a homotetramer is formed.

The enzyme catalyses L-aspartate + ATP = 4-phospho-L-aspartate + ADP. It participates in amino-acid biosynthesis; L-lysine biosynthesis via DAP pathway; (S)-tetrahydrodipicolinate from L-aspartate: step 1/4. With respect to regulation, synthesis and activity are sensitive to the allosteric inhibitor lysine, one of the end metabolites of the aspartic acid family branched pathway. This Escherichia coli (strain K12) protein is Lysine-sensitive aspartokinase 3 (lysC).